The following is a 483-amino-acid chain: Cysteine proteinase 1, mitochondrial (483 aa).

A mitochondrion-targeting transit peptide spans 1–30; sequence MLPTSVSRSLYLKTFRSHLLRAPQIVLKRM. Active-site residues include cysteine 102, histidine 398, and asparagine 421. Lysine 483 is a propeptide (removed in mature form; by autocatalysis).

The protein belongs to the peptidase C1 family. As to quaternary structure, homohexamer. Binds to nucleic acids. Binds single-stranded DNA and RNA with higher affinity than double-stranded DNA. The N-terminus of isoform Cytoplasmic is blocked.

Its subcellular location is the mitochondrion. The protein localises to the cytoplasm. It carries out the reaction Inactivates bleomycin B2 (a cytotoxic glycometallopeptide) by hydrolysis of a carboxyamide bond of beta-aminoalanine, but also shows general aminopeptidase activity. The specificity varies somewhat with source, but amino acid arylamides of Met, Leu and Ala are preferred.. Its activity is regulated as follows. Inhibited by E64, a specific inhibitor of cysteine proteases, N-ethylmaleimide, iodacetamide, and mercury and zinc ions. Its function is as follows. The normal physiological role of the enzyme is unknown, but it is not essential for the viability of yeast cells. Has aminopeptidase activity, shortening substrate peptides sequentially by 1 amino acid. Has bleomycin hydrolase activity, which can protect the cell from the toxic effects of bleomycin. Has homocysteine-thiolactonase activity, protecting the cell against homocysteine toxicity. Acts as a repressor in the GAL4 regulatory system, but this does not require either the peptidase or nucleic acid-binding activities. This Saccharomyces cerevisiae (strain JAY291) (Baker's yeast) protein is Cysteine proteinase 1, mitochondrial (LAP3).